The primary structure comprises 380 residues: F-box protein At4g18380 (380 aa).

An F-box domain is found at 22–70; it reads IDHFDNLPDSILLLIFNNIGDVKALGRCSVVSKRFHSLIPQVENVFVRV.

The sequence is that of F-box protein At4g18380 from Arabidopsis thaliana (Mouse-ear cress).